The following is a 349-amino-acid chain: Phenylalanine--tRNA ligase alpha subunit (349 aa).

A Mg(2+)-binding site is contributed by Glu258.

It belongs to the class-II aminoacyl-tRNA synthetase family. Phe-tRNA synthetase alpha subunit type 1 subfamily. Tetramer of two alpha and two beta subunits. Mg(2+) serves as cofactor.

It is found in the cytoplasm. It carries out the reaction tRNA(Phe) + L-phenylalanine + ATP = L-phenylalanyl-tRNA(Phe) + AMP + diphosphate + H(+). The chain is Phenylalanine--tRNA ligase alpha subunit from Rickettsia rickettsii (strain Sheila Smith).